A 347-amino-acid polypeptide reads, in one-letter code: Haptoglobin (347 aa).

The signal sequence occupies residues 1–18 (MRALGAVVALLLCGQLFA). A Sushi domain is found at 31-88 (DSCPKPPEIPKGYVEHMVRYHCQTYYKLRTAGDGVYTLDSNKQWTNKVTGEKLPECEA). 2 disulfides stabilise this stretch: C52/C86 and C90/C207. One can recognise a Peptidase S1 domain in the interval 103–345 (IMGGSLDAKG…ILDWIQTTIA (243 aa)). N-linked (GlcNAc...) asparagine glycans are attached at residues N125, N151, N183, and N232. Intrachain disulfides connect C250–C281 and C292–C322. Residues 259-264 (VPEKKT) are interaction with CD163.

The protein belongs to the peptidase S1 family. In terms of assembly, tetramer of two alpha and two beta chains; disulfide-linked. The hemoglobin/haptoglobin complex is composed of a haptoglobin dimer bound to two hemoglobin alpha-beta dimers. Interacts with CD163. Interacts with ERGIC3. In terms of tissue distribution, expressed by the liver and secreted in plasma.

The protein localises to the secreted. In terms of biological role, as a result of hemolysis, hemoglobin is found to accumulate in the kidney and is secreted in the urine. Haptoglobin captures, and combines with free plasma hemoglobin to allow hepatic recycling of heme iron and to prevent kidney damage. Haptoglobin also acts as an antioxidant, has antibacterial activity and plays a role in modulating many aspects of the acute phase response. Hemoglobin/haptoglobin complexes are rapidly cleared by the macrophage CD163 scavenger receptor expressed on the surface of liver Kupfer cells through an endocytic lysosomal degradation pathway. This chain is Haptoglobin (HP), found in Sus scrofa (Pig).